The chain runs to 341 residues: NADH-ubiquinone oxidoreductase chain 2 (341 aa).

A run of 10 helical transmembrane segments spans residues 8 to 28, 61 to 81, 95 to 115, 121 to 141, 146 to 166, 174 to 194, 195 to 215, 238 to 258, 273 to 293, and 321 to 341; these read ILFT…NSWL, FLTQ…LMLA, MIIM…FWFP, LTWM…LMLI, IKNL…IGGL, LMAF…MISE, SIWL…TFMF, FSLF…GFLP, FLLT…LRIC, and LIMT…FFML.

The protein belongs to the complex I subunit 2 family.

The protein resides in the mitochondrion inner membrane. It carries out the reaction a ubiquinone + NADH + 5 H(+)(in) = a ubiquinol + NAD(+) + 4 H(+)(out). In terms of biological role, core subunit of the mitochondrial membrane respiratory chain NADH dehydrogenase (Complex I) that is believed to belong to the minimal assembly required for catalysis. Complex I functions in the transfer of electrons from NADH to the respiratory chain. The immediate electron acceptor for the enzyme is believed to be ubiquinone. In Drosophila yakuba (Fruit fly), this protein is NADH-ubiquinone oxidoreductase chain 2 (mt:ND2).